A 481-amino-acid polypeptide reads, in one-letter code: Probable autolysin LytO (481 aa).

The 142-residue stretch at 7-148 folds into the Peptidase C51 domain; the sequence is KNEFIEWLKT…AYDFPMWFIR (142 aa). Over residues 155–165 the composition is skewed to polar residues; sequence TAPRSVQSPTQ. A disordered region spans residues 155-177; sequence TAPRSVQSPTQAPKKETAKPQPK. Residues 198-323 enclose the N-acetylmuramoyl-L-alanine amidase domain; that stretch reads SNPKGIVIHN…NEFTSTSCPH (126 aa). The 69-residue stretch at 398-466 folds into the SH3b domain; it reads EESARFTNGN…YLPIRTWNGS (69 aa).

This sequence belongs to the N-acetylmuramoyl-L-alanine amidase 2 family.

It carries out the reaction Hydrolyzes the link between N-acetylmuramoyl residues and L-amino acid residues in certain cell-wall glycopeptides.. Functionally, has weak lytic activity toward S.aureus cells. This is Probable autolysin LytO from Staphylococcus aureus (strain NCTC 8325 / PS 47).